A 243-amino-acid chain; its full sequence is 2-C-methyl-D-erythritol 4-phosphate cytidylyltransferase (243 aa).

It belongs to the IspD/TarI cytidylyltransferase family. IspD subfamily.

The enzyme catalyses 2-C-methyl-D-erythritol 4-phosphate + CTP + H(+) = 4-CDP-2-C-methyl-D-erythritol + diphosphate. It participates in isoprenoid biosynthesis; isopentenyl diphosphate biosynthesis via DXP pathway; isopentenyl diphosphate from 1-deoxy-D-xylulose 5-phosphate: step 2/6. Its function is as follows. Catalyzes the formation of 4-diphosphocytidyl-2-C-methyl-D-erythritol from CTP and 2-C-methyl-D-erythritol 4-phosphate (MEP). The sequence is that of 2-C-methyl-D-erythritol 4-phosphate cytidylyltransferase from Aeromonas hydrophila subsp. hydrophila (strain ATCC 7966 / DSM 30187 / BCRC 13018 / CCUG 14551 / JCM 1027 / KCTC 2358 / NCIMB 9240 / NCTC 8049).